The sequence spans 342 residues: Phenylalanine--tRNA ligase alpha subunit (342 aa).

Position 257 (Glu257) interacts with Mg(2+).

It belongs to the class-II aminoacyl-tRNA synthetase family. Phe-tRNA synthetase alpha subunit type 1 subfamily. Tetramer of two alpha and two beta subunits. Mg(2+) serves as cofactor.

It is found in the cytoplasm. It catalyses the reaction tRNA(Phe) + L-phenylalanine + ATP = L-phenylalanyl-tRNA(Phe) + AMP + diphosphate + H(+). The chain is Phenylalanine--tRNA ligase alpha subunit (pheS) from Chlamydia trachomatis serovar D (strain ATCC VR-885 / DSM 19411 / UW-3/Cx).